The primary structure comprises 426 residues: Lipid droplet localized protein (426 aa).

Residues 278 to 298 (FYGYLIGLWIMFLSIFVKYPF) traverse the membrane as a helical segment.

Belongs to the saccharopine dehydrogenase family.

It is found in the membrane. It localises to the lipid droplet. This is Lipid droplet localized protein from Caenorhabditis elegans.